Consider the following 87-residue polypeptide: UPF0367 protein SynRCC307_0258 (87 aa).

This sequence belongs to the UPF0367 family.

This Synechococcus sp. (strain RCC307) protein is UPF0367 protein SynRCC307_0258.